A 500-amino-acid polypeptide reads, in one-letter code: MSNMQQKTDVILIGAGIMSATLGSLLKELAPEWEIKVFEKLASAGEESSNEWNNAGTGHSALCELNYTSEKADGSIDISKAVKVNEQFQLSRQFWAYLVKSKLIRNPQDFIMPLPHMSLVQGEKNVEFLKNRFEALSKNPLFQGMEFSDAPETLKRWLPLIMEGRTSNEPMAATKIDSGTDVNFGALTRMLFDYLKTKNVELNYKHSVENIKRTKNGLWEVKVHDMNSGKIEHHTAKFVFIGGGGGSLPLLQKTGIPESKHIGGFPVSGLFMVCKNQKVVEQHHAKVYGKAKVGAPPMSVPHLDTRYIDNKKALLFGPFAGFSPKFLKTGSNLDLIGSVKPNNVLTMLAAGVKEMGLTKYLIQQVMLSHEKRMEELREFIPNAKSEDWDIVVAGQRVQVIKDTDAGGKGTLQFGTEVVSAADGSIAALLGASPGASTAVHVMLEVLEKCFPSRMVEWEEKIKEMIPSYGISLTENPRLFQDLHTSTGRTLGLNEKETVHN.

Belongs to the MQO family. FAD serves as cofactor.

The enzyme catalyses (S)-malate + a quinone = a quinol + oxaloacetate. It participates in carbohydrate metabolism; tricarboxylic acid cycle; oxaloacetate from (S)-malate (quinone route): step 1/1. The chain is Probable malate:quinone oxidoreductase from Bacillus cereus (strain B4264).